Here is a 203-residue protein sequence, read N- to C-terminus: Dephospho-CoA kinase (203 aa).

Positions 3–202 (KIGLTGSIGM…MRIAKGDFRN (200 aa)) constitute a DPCK domain. An ATP-binding site is contributed by 11 to 16 (GMGKST).

It belongs to the CoaE family.

Its subcellular location is the cytoplasm. The enzyme catalyses 3'-dephospho-CoA + ATP = ADP + CoA + H(+). Its pathway is cofactor biosynthesis; coenzyme A biosynthesis; CoA from (R)-pantothenate: step 5/5. Its function is as follows. Catalyzes the phosphorylation of the 3'-hydroxyl group of dephosphocoenzyme A to form coenzyme A. This is Dephospho-CoA kinase from Rhizobium etli (strain ATCC 51251 / DSM 11541 / JCM 21823 / NBRC 15573 / CFN 42).